Here is a 102-residue protein sequence, read N- to C-terminus: Iron-sulfur cluster assembly protein CyaY (102 aa).

Belongs to the frataxin family.

In terms of biological role, involved in iron-sulfur (Fe-S) cluster assembly. May act as a regulator of Fe-S biogenesis. The polypeptide is Iron-sulfur cluster assembly protein CyaY (Actinobacillus succinogenes (strain ATCC 55618 / DSM 22257 / CCUG 43843 / 130Z)).